Here is a 235-residue protein sequence, read N- to C-terminus: uncharacterized protein (235 aa).

Disordered stretches follow at residues 1–47 (MSHK…QSTN) and 78–128 (QEHH…KQPQ). The span at 20 to 33 (HPPGQSLSSISWSP) shows a compositional bias: polar residues. Low complexity predominate over residues 84–98 (QQQQQQRQNIRSQNS). A compositionally biased stretch (polar residues) spans 106 to 128 (VQESQWTSSASNSSLKKQEKQPQ).

This is an uncharacterized protein from Saccharomyces cerevisiae (strain ATCC 204508 / S288c) (Baker's yeast).